The following is a 656-amino-acid chain: Hemocyanin subunit A (656 aa).

Residues 1 to 18 (MWSLALATLFVLGTVIRA) form the signal peptide. Residues His197, His201, and His227 each contribute to the Cu cation site. Residue Asn313 is glycosylated (N-linked (GlcNAc...) asparagine). His348, His352, and His388 together coordinate Cu cation. Cys558 and Cys606 are oxidised to a cystine.

It belongs to the tyrosinase family. Hemocyanin subfamily. 36-chain polymer consisting of 6 hexamers, each of which includes 4 different chains, A, B, C and D. As to expression, hemolymph.

The protein resides in the secreted. The protein localises to the extracellular space. Functionally, hemocyanins are copper-containing oxygen carriers occurring freely dissolved in the hemolymph of many mollusks and arthropods. The polypeptide is Hemocyanin subunit A (HCA) (Scutigera coleoptrata (House centipede)).